A 395-amino-acid polypeptide reads, in one-letter code: Biotin biosynthesis cytochrome P450 (395 aa).

R60 provides a ligand contact to substrate. 89 to 93 (HRRLR) provides a ligand contact to heme. Substrate is bound at residue 169–173 (IDFTR). Cysteines 250 and 275 form a disulfide. 285 to 287 (TAR) provides a ligand contact to heme. Residue Y307 participates in substrate binding. Heme is bound by residues 343–345 (HVC) and C345.

Heme is required as a cofactor.

It catalyses the reaction a C2-C8-saturated long-chain fatty acyl-[ACP] + 2 reduced [flavodoxin] + 3 O2 = 6-carboxyhexanoyl-[ACP] + a fatty aldehyde + 2 oxidized [flavodoxin] + 3 H2O + 3 H(+). It participates in cofactor biosynthesis; biotin biosynthesis. Catalyzes the C-C bond cleavage of fatty acid linked to acyl carrier protein (ACP) to generate pimelic acid for biotin biosynthesis. It has high affinity for long-chain fatty acids with the greatest affinity for myristic acid. This is Biotin biosynthesis cytochrome P450 (bioI) from Bacillus subtilis (strain 168).